The sequence spans 878 residues: AP-2 complex subunit alpha (878 aa).

Belongs to the adaptor complexes large subunit family. As to quaternary structure, adaptor protein complex 2 (AP-2) is a heterotetramer composed of two large adaptins (alpha-type subunit apl3 and beta-type subunit apl1), a medium chain (mu-type subunit apm4) and a small adaptin (sigma-type subunit aps2).

The protein localises to the cell membrane. It localises to the membrane. It is found in the coated pit. In terms of biological role, adaptins are components of the adaptor complexes which link clathrin to receptors in coated vesicles. Clathrin-associated protein complexes are believed to interact with the cytoplasmic tails of membrane proteins, leading to their selection and concentration. Alpha adaptin is a subunit of the plasma membrane adaptor. The polypeptide is AP-2 complex subunit alpha (apl3) (Schizosaccharomyces pombe (strain 972 / ATCC 24843) (Fission yeast)).